Here is a 1002-residue protein sequence, read N- to C-terminus: Hypoxia up-regulated protein 1 (1002 aa).

The signal sequence occupies residues 1 to 23 (MARAPRWMLGWLLLACCVPHTEP). Disordered stretches follow at residues 576–698 (LFGG…PKKQ) and 918–1002 (KPKP…NDEL). Residues 643 to 675 (PPKEESQKNEEGEKSEARDPKEDKETVNEEELS) are compositionally biased toward basic and acidic residues. Residues 933 to 947 (GKNATGTSESENTIP) are compositionally biased toward polar residues. Composition is skewed to basic and acidic residues over residues 951 to 962 (GKQEEKPEDISP) and 983 to 1002 (SSKKEKKPEAGGESRKNDEL). A Prevents secretion from ER motif is present at residues 999 to 1002 (NDEL).

Belongs to the heat shock protein 70 family.

The protein resides in the endoplasmic reticulum lumen. In terms of biological role, has a pivotal role in cytoprotective cellular mechanisms triggered by oxygen deprivation. Promotes HSPA5/BiP-mediated ATP nucleotide exchange and thereby activates the unfolded protein response (UPR) pathway in the presence of endoplasmic reticulum stress. May play a role as a molecular chaperone and participate in protein folding. The polypeptide is Hypoxia up-regulated protein 1 (HYOU1) (Gallus gallus (Chicken)).